A 443-amino-acid chain; its full sequence is Threonine/serine transporter TdcC (443 aa).

Helical transmembrane passes span tryptophan 24–alanine 44, glycine 45–phenylalanine 65, valine 95–tyrosine 115, valine 140–methionine 160, valine 163–isoleucine 183, isoleucine 207–isoleucine 227, alanine 259–serine 279, alanine 319–leucine 339, leucine 363–proline 383, isoleucine 385–proline 405, and serine 423–methionine 443.

Belongs to the amino acid/polyamine transporter 2 family. SdaC/TdcC subfamily.

Its subcellular location is the cell inner membrane. The catalysed reaction is L-threonine(in) + H(+)(in) = L-threonine(out) + H(+)(out). It catalyses the reaction L-serine(in) + H(+)(in) = L-serine(out) + H(+)(out). In terms of biological role, involved in the import of threonine and serine into the cell, with the concomitant import of a proton (symport system). This chain is Threonine/serine transporter TdcC, found in Edwardsiella tarda.